The chain runs to 155 residues: UPF0178 protein RHE_CH02229 (155 aa).

It belongs to the UPF0178 family.

The polypeptide is UPF0178 protein RHE_CH02229 (Rhizobium etli (strain ATCC 51251 / DSM 11541 / JCM 21823 / NBRC 15573 / CFN 42)).